The sequence spans 306 residues: Cytochrome P450 monooxygenase aclO (306 aa).

A heme-binding site is contributed by Cys-237.

Belongs to the cytochrome P450 family. Heme serves as cofactor.

The protein operates within mycotoxin biosynthesis. In terms of biological role, cytochrome P450 monooxygenase; part of the gene cluster that mediates the biosynthesis of aspirochlorine (or antibiotic A30641), an unusual halogenated spiro compound with distinctive antifungal properties due to selective inhibition of protein biosynthesis, and which is also active against bacteria, viruses, and murine tumor cells. The non-ribosomal peptide synthetase (NRPS) aclP is responsible the formation of the diketopiperazine (DKP) core from the condensation of 2 phenylalanine residues. One Phe residue is tailored into chlorotyrosine by hydroxylation and chlorination, whereas the second Phe undergoes an unprecedented C-C bond cleavage to be converted into glycine. After formation of the DKP, sulfur is incorporated into the DKP by conjugation with glutathione by aclG, followed by its stepwise degradation to the thiol by aclI, aclJ and aclK, and the dithiol oxidation by aclT. In addition, oxygenases (aclB, aclC, aclL and aclO) and O-methyltransferases (aclM and aclU) act as tailoring enzymes to produce the intermediate dechloroaspirochlorine. Ultimately, chlorination of dechloroaspirochlorine by the halogenase aclH is the last step in the aspirochlorine pathway. This Aspergillus oryzae (strain ATCC 42149 / RIB 40) (Yellow koji mold) protein is Cytochrome P450 monooxygenase aclO.